A 262-amino-acid polypeptide reads, in one-letter code: MRNLTLQRGRRQILSQLSLDLRAGELTVLLGPNGTGKSTLLKCISGEMAAQGEIRLFGQPQSQWPAPILARRMAILPQSSALSFSFLAREVVALGRLPHASGKIADEVIIQRCLQAVGAEHLADSAYTVLSGGEKQRIHFARVLAQLDEHMVDSPQTEREPTAAAPKLLMLDEPTSALDLSHQHQTLQTAQRRARQGDAVLVILHDLNLAARYADRILLLNHGQIQADGSPEEVLTAERIKQIFAFDAQVFRHPETGRLHIS.

The region spanning 1 to 247 is the ABC transporter domain; the sequence is MRNLTLQRGR…ERIKQIFAFD (247 aa). 31 to 38 serves as a coordination point for ATP; sequence GPNGTGKS.

The protein belongs to the ABC transporter superfamily. Heme (hemin) importer (TC 3.A.1.14.5) family. As to quaternary structure, the complex is composed of two ATP-binding proteins (HmuV), two transmembrane proteins (HmuU) and a solute-binding protein (HmuT).

The protein localises to the cell inner membrane. Functionally, part of the ABC transporter complex HmuTUV involved in hemin import. Responsible for energy coupling to the transport system. The chain is Hemin import ATP-binding protein HmuV from Plesiomonas shigelloides (Aeromonas shigelloides).